A 307-amino-acid chain; its full sequence is Glutaminase (307 aa).

Residues Ser66, Asn117, Glu161, Asn168, Tyr192, Tyr243, and Val261 each coordinate substrate.

This sequence belongs to the glutaminase family. As to quaternary structure, homotetramer.

It catalyses the reaction L-glutamine + H2O = L-glutamate + NH4(+). The sequence is that of Glutaminase from Serratia proteamaculans (strain 568).